A 137-amino-acid chain; its full sequence is MGDIWTWLISFFFLIALVGIIVYQLVCLADLEFDYINPYDSASRINSVVLPEFIVQGVLCVFYLLTGHWFMTLLCLPYLYYNFHLYSKRQHLVDVTEIFNLLNWEKKKRLFKLAYIVLNLFLTIFWMIYSALDDYED.

3 helical membrane passes run 8–28 (LISF…LVCL), 53–73 (FIVQ…FMTL), and 113–133 (LAYI…SALD).

This sequence belongs to the cornichon family.

Its subcellular location is the membrane. The sequence is that of Protein cornichon homolog 4 from Arabidopsis thaliana (Mouse-ear cress).